We begin with the raw amino-acid sequence, 373 residues long: GTPase Obg (373 aa).

The Obg domain maps to 1-159 (MKFIDEARIE…RMVRLELKVL (159 aa)). The interval 128–147 (LHFKSSTNRAPRQKTDGKPG) is disordered. An OBG-type G domain is found at 160-334 (ADVGLLGMPN…LCYAVFDHIS (175 aa)). GTP is bound by residues 166–173 (GMPNAGKS), 191–195 (FTTLA), 213–216 (DIPG), 284–287 (NKLD), and 315–317 (SAL). Residues Ser173 and Thr193 each coordinate Mg(2+). The disordered stretch occupies residues 354–373 (FREKPQAPAAADDAGTDPQV). Positions 359–373 (QAPAAADDAGTDPQV) are enriched in low complexity.

This sequence belongs to the TRAFAC class OBG-HflX-like GTPase superfamily. OBG GTPase family. In terms of assembly, monomer. Requires Mg(2+) as cofactor.

The protein localises to the cytoplasm. Its function is as follows. An essential GTPase which binds GTP, GDP and possibly (p)ppGpp with moderate affinity, with high nucleotide exchange rates and a fairly low GTP hydrolysis rate. Plays a role in control of the cell cycle, stress response, ribosome biogenesis and in those bacteria that undergo differentiation, in morphogenesis control. This is GTPase Obg from Paraburkholderia phytofirmans (strain DSM 17436 / LMG 22146 / PsJN) (Burkholderia phytofirmans).